The chain runs to 251 residues: DNA repair protein RecO (251 aa).

The protein belongs to the RecO family.

Functionally, involved in DNA repair and RecF pathway recombination. The protein is DNA repair protein RecO of Nitratidesulfovibrio vulgaris (strain ATCC 29579 / DSM 644 / CCUG 34227 / NCIMB 8303 / VKM B-1760 / Hildenborough) (Desulfovibrio vulgaris).